The sequence spans 532 residues: Aspartate--tRNA ligase 1, cytoplasmic (532 aa).

A coiled-coil region spans residues 7–41 (LEECGEKISKKESKKRAAKLEKLLRKQEREEATSS). The interval 31-58 (RKQEREEATSSSLSLEEEDESCSSNYGD) is disordered. The segment at residues 88–169 (VSIRGRLHKN…QVEIHVRKMY (82 aa)) is a DNA-binding region (OB). L-aspartate is bound at residue glutamate 260. Residues 282-285 (QLHK) form an aspartate region. Arginine 304 lines the L-aspartate pocket. Residues 304-306 (RAE), 312-314 (RHL), and glutamate 455 each bind ATP. Mg(2+)-binding residues include glutamate 455 and serine 458. Serine 458 and arginine 462 together coordinate L-aspartate. Residue 503–506 (GLER) participates in ATP binding.

The protein belongs to the class-II aminoacyl-tRNA synthetase family. Type 2 subfamily.

The protein resides in the cytoplasm. Its subcellular location is the cytosol. It carries out the reaction tRNA(Asp) + L-aspartate + ATP = L-aspartyl-tRNA(Asp) + AMP + diphosphate. Its function is as follows. Catalyzes the specific attachment of an amino acid to its cognate tRNA in a 2 step reaction: the amino acid (AA) is first activated by ATP to form AA-AMP and then transferred to the acceptor end of the tRNA. The polypeptide is Aspartate--tRNA ligase 1, cytoplasmic (Arabidopsis thaliana (Mouse-ear cress)).